A 151-amino-acid polypeptide reads, in one-letter code: SsrA-binding protein (151 aa).

Belongs to the SmpB family.

The protein resides in the cytoplasm. Functionally, required for rescue of stalled ribosomes mediated by trans-translation. Binds to transfer-messenger RNA (tmRNA), required for stable association of tmRNA with ribosomes. tmRNA and SmpB together mimic tRNA shape, replacing the anticodon stem-loop with SmpB. tmRNA is encoded by the ssrA gene; the 2 termini fold to resemble tRNA(Ala) and it encodes a 'tag peptide', a short internal open reading frame. During trans-translation Ala-aminoacylated tmRNA acts like a tRNA, entering the A-site of stalled ribosomes, displacing the stalled mRNA. The ribosome then switches to translate the ORF on the tmRNA; the nascent peptide is terminated with the 'tag peptide' encoded by the tmRNA and targeted for degradation. The ribosome is freed to recommence translation, which seems to be the essential function of trans-translation. In Nitrosomonas europaea (strain ATCC 19718 / CIP 103999 / KCTC 2705 / NBRC 14298), this protein is SsrA-binding protein.